Reading from the N-terminus, the 191-residue chain is Peptidyl-tRNA hydrolase (191 aa).

Position 15 (Tyr15) interacts with tRNA. The active-site Proton acceptor is the His20. TRNA-binding residues include Phe66, Asn68, and Asn114.

It belongs to the PTH family. In terms of assembly, monomer.

It is found in the cytoplasm. It carries out the reaction an N-acyl-L-alpha-aminoacyl-tRNA + H2O = an N-acyl-L-amino acid + a tRNA + H(+). Its function is as follows. Hydrolyzes ribosome-free peptidyl-tRNAs (with 1 or more amino acids incorporated), which drop off the ribosome during protein synthesis, or as a result of ribosome stalling. Functionally, catalyzes the release of premature peptidyl moieties from peptidyl-tRNA molecules trapped in stalled 50S ribosomal subunits, and thus maintains levels of free tRNAs and 50S ribosomes. The sequence is that of Peptidyl-tRNA hydrolase from Streptococcus agalactiae serotype Ia (strain ATCC 27591 / A909 / CDC SS700).